Reading from the N-terminus, the 392-residue chain is MIDCRYYQQNECRSCQWLEIPCSQQLTEKQYHLKQQLISINYDEAQWVAPFQSNQQGFRNKAKMVVSGSVERPILGILKNPNDPQSAIDLCDCPLYPTHFSAIFSILKDFIGRAGLVPYNIAKQKGELKYILLTESIATEKLMLRFVLRTENKLPLIRRELPKLLEKLPHLEVISINLQPQHAAILEGEQEIFLTEQQFLPENFNGIPLFIRPRGFFQTNPKVAAGLYATAQQWVAEFPIYNLWDLFCGVGGFGLHCAKALQEKWGKPIKLTGIEISSSAILAASHSAKILGLEHVNFQSLDAASVIENKNENKPDLVIVNPPRRGIGKELSEFLNQIQPHFILYSSCNAMTMGKDLQHLTCYKPLKIQLFDMFPQTSHYEVLVLLERKKIN.

[4Fe-4S] cluster is bound by residues Cys-4, Cys-12, Cys-15, and Cys-93. Gln-218, Phe-247, Glu-275, and Asn-321 together coordinate S-adenosyl-L-methionine. Cys-348 serves as the catalytic Nucleophile.

It belongs to the class I-like SAM-binding methyltransferase superfamily. RNA M5U methyltransferase family. RlmC subfamily.

The catalysed reaction is uridine(747) in 23S rRNA + S-adenosyl-L-methionine = 5-methyluridine(747) in 23S rRNA + S-adenosyl-L-homocysteine + H(+). In terms of biological role, catalyzes the formation of 5-methyl-uridine at position 747 (m5U747) in 23S rRNA. This Haemophilus influenzae (strain ATCC 51907 / DSM 11121 / KW20 / Rd) protein is 23S rRNA (uracil(747)-C(5))-methyltransferase RlmC.